The following is a 925-amino-acid chain: Probable dipeptidyl-aminopeptidase B (925 aa).

The tract at residues 1 to 104 (MTPYRDVPPV…RHAQKKGPGM (104 aa)) is disordered. Over 1–110 (MTPYRDVPPV…GPGMDRGMRR (110 aa)) the chain is Cytoplasmic. The segment covering 31–40 (ESGSSVSTTS) has biased composition (low complexity). A compositionally biased stretch (basic and acidic residues) spans 55–72 (LSEKQPRGDDNEDALKDE). Residues 111 to 131 (ALLIAAGLLVSAWVAGLFVYI) form a helical; Signal-anchor for type II membrane protein membrane-spanning segment. Over 132-925 (ATKSYKPASA…PKPNGKRRAA (794 aa)) the chain is Vacuolar. N-linked (GlcNAc...) asparagine glycosylation occurs at N369. The active-site Charge relay system is the S773. N832 is a glycosylation site (N-linked (GlcNAc...) asparagine). Active-site charge relay system residues include D850 and H883.

The protein belongs to the peptidase S9B family.

The protein resides in the vacuole membrane. The catalysed reaction is Release of an N-terminal dipeptide, Xaa-Yaa-|-Zaa-, from a polypeptide, preferentially when Yaa is Pro, provided Zaa is neither Pro nor hydroxyproline.. In terms of biological role, type IV dipeptidyl-peptidase which removes N-terminal dipeptides sequentially from polypeptides having unsubstituted N-termini provided that the penultimate residue is proline. This Chaetomium globosum (strain ATCC 6205 / CBS 148.51 / DSM 1962 / NBRC 6347 / NRRL 1970) (Soil fungus) protein is Probable dipeptidyl-aminopeptidase B (DAPB).